Reading from the N-terminus, the 225-residue chain is Receptor-transporting protein 2 (225 aa).

Topologically, residues 1–196 (MCTSLTTCEW…RAQAGSGYNF (196 aa)) are cytoplasmic. The segment at 52–161 (ASGRFHCSWC…AEFCEACQEG (110 aa)) adopts a 3CxxC-type zinc-finger fold. Residues 197 to 219 (LSLRWCLFWASLCLLVVYLQFSF) traverse the membrane as a helical segment. At 220–225 (LSPAFF) the chain is on the extracellular side.

The protein belongs to the TMEM7 family. Interacts with olfactory receptors. As to expression, expressed in circumvallate papillae and testis.

It localises to the cell membrane. In terms of biological role, specifically promotes functional cell surface expression of olfactory receptors, but not of other GPCRs. In Homo sapiens (Human), this protein is Receptor-transporting protein 2 (RTP2).